The chain runs to 451 residues: Chromosomal replication initiator protein DnaA (451 aa).

The segment at M1 to T72 is domain I, interacts with DnaA modulators. A domain II region spans residues T72–A114. Over residues G81 to K90 the composition is skewed to polar residues. Positions G81–G106 are disordered. The tract at residues N115 to A331 is domain III, AAA+ region. Residues G159, G161, K162, and T163 each coordinate ATP. The interval H332–G451 is domain IV, binds dsDNA.

The protein belongs to the DnaA family. Oligomerizes as a right-handed, spiral filament on DNA at oriC.

It localises to the cytoplasm. Functionally, plays an essential role in the initiation and regulation of chromosomal replication. ATP-DnaA binds to the origin of replication (oriC) to initiate formation of the DNA replication initiation complex once per cell cycle. Binds the DnaA box (a 9 base pair repeat at the origin) and separates the double-stranded (ds)DNA. Forms a right-handed helical filament on oriC DNA; dsDNA binds to the exterior of the filament while single-stranded (ss)DNA is stabiized in the filament's interior. The ATP-DnaA-oriC complex binds and stabilizes one strand of the AT-rich DNA unwinding element (DUE), permitting loading of DNA polymerase. After initiation quickly degrades to an ADP-DnaA complex that is not apt for DNA replication. Binds acidic phospholipids. This is Chromosomal replication initiator protein DnaA from Coxiella burnetii (strain CbuK_Q154) (Coxiella burnetii (strain Q154)).